The chain runs to 313 residues: Ribosomal RNA small subunit methyltransferase H (313 aa).

S-adenosyl-L-methionine-binding positions include 31–33, aspartate 51, phenylalanine 77, aspartate 95, and glutamine 102; that span reads GGH.

This sequence belongs to the methyltransferase superfamily. RsmH family.

It localises to the cytoplasm. It carries out the reaction cytidine(1402) in 16S rRNA + S-adenosyl-L-methionine = N(4)-methylcytidine(1402) in 16S rRNA + S-adenosyl-L-homocysteine + H(+). Specifically methylates the N4 position of cytidine in position 1402 (C1402) of 16S rRNA. This chain is Ribosomal RNA small subunit methyltransferase H, found in Xylella fastidiosa (strain 9a5c).